Reading from the N-terminus, the 335-residue chain is Trans-3-hydroxy-L-proline dehydratase (335 aa).

The active-site Proton acceptor is the C91. Residues 92 to 93, D251, and 256 to 257 contribute to the substrate site; these read GH and GS.

It belongs to the proline racemase family.

It catalyses the reaction trans-3-hydroxy-L-proline = 1-pyrroline-2-carboxylate + H2O. Functionally, catalyzes the dehydration of trans-3-hydroxy-L-proline (t3LHyp) to Delta(1)-pyrroline-2-carboxylate (Pyr2C). Is likely involved in a degradation pathway that converts t3LHyp to L-proline. Displays neither trans-4-hydroxy-L-proline (t4LHyp) epimerase nor proline racemase activity. In Burkholderia ambifaria (strain ATCC BAA-244 / DSM 16087 / CCUG 44356 / LMG 19182 / AMMD) (Burkholderia cepacia (strain AMMD)), this protein is Trans-3-hydroxy-L-proline dehydratase.